An 860-amino-acid chain; its full sequence is Leucine--tRNA ligase (860 aa).

The 'HIGH' region signature appears at 42–52 (PYPSGRLHMGH). A 'KMSKS' region motif is present at residues 619–623 (KMSKS). Lys-622 contacts ATP.

This sequence belongs to the class-I aminoacyl-tRNA synthetase family.

It localises to the cytoplasm. The enzyme catalyses tRNA(Leu) + L-leucine + ATP = L-leucyl-tRNA(Leu) + AMP + diphosphate. The protein is Leucine--tRNA ligase of Escherichia coli (strain SMS-3-5 / SECEC).